Consider the following 239-residue polypeptide: Leucine rich adaptor protein 1 (239 aa).

2 LRR repeats span residues Leu55–Leu83 and Leu93–Leu114. Residues Leu107–Gly116 are compositionally biased toward low complexity. 2 disordered regions span residues Leu107–Leu139 and Lys200–Ala219. A phosphoserine mark is found at Ser118, Ser126, Ser129, and Ser213.

As to quaternary structure, forms a tripartite complex with CDC42BPA/CDC42BPB and MYO18A acting as an adapter connecting both. Its binding to CDC42BPA/CDC42BPB results in their activation by abolition of their negative autoregulation. Interacts with CDC42BPA and CDC42BPB.

The protein localises to the cytoplasm. Acts as an activator of the canonical NF-kappa-B pathway and drive the production of pro-inflammatory cytokines. Promotes the antigen (Ag)-presenting and priming function of dendritic cells via the canonical NF-kappa-B pathway. In concert with MYO18A and CDC42BPA/CDC42BPB, is involved in modulating lamellar actomyosin retrograde flow that is crucial to cell protrusion and migration. Activates CDC42BPA/CDC42BPB and targets it to actomyosin through its interaction with MYO18A, leading to MYL9/MLC2 phosphorylation and MYH9/MYH10-dependent actomyosin assembly in the lamella. In Homo sapiens (Human), this protein is Leucine rich adaptor protein 1 (LURAP1).